We begin with the raw amino-acid sequence, 122 residues long: Lycotoxin-Pa4a (122 aa).

Residues 1-20 form the signal peptide; it reads MKLGIFFSVFFLAMIHSCLS. Positions 21-47 are excised as a propeptide; it reads ETNEDKNLESYFREDDLKALSFGEYAR. 4 disulfide bridges follow: C58/C73, C65/C82, C72/C100, and C84/C98.

The protein belongs to the neurotoxin 19 (CSTX) family. In terms of tissue distribution, expressed by the venom gland.

Its subcellular location is the secreted. The protein localises to the target cell membrane. Functionally, potent antibacterial peptide with anti-inflammatory properties. Inhibits both Gram-negative and Gram-positive bacteria by disrupting both the outer membrane and the cytosolic membrane of bacteria. Also downregulates the expression of pro-inflammatory mediators (cyclooxygenase-2 (PTGS2/COX2), nitric oxide-induced synthase (NOS2), IL-1 beta (IL1B), TNF-alpha (TNF)) and upregulates the level of anti-inflammatory cytokine (IL10) by inactivating mitogen-activated protein kinase signaling in a lipopolysaccharide-stimulated murine macrophage cell line. This chain is Lycotoxin-Pa4a, found in Pardosa astrigera (Wolf spider).